Reading from the N-terminus, the 205-residue chain is Guanylyl cyclase-activating protein 1 (205 aa).

Glycine 2 is lipidated: N-myristoyl glycine. Deamidated asparagine is present on asparagine 3. EF-hand domains follow at residues 14-49 (SSTE…KNLS), 51-86 (WASQ…VLKG), 87-122 (KVEQ…IRAI), and 131-166 (TAEE…DQML). 15 residues coordinate Ca(2+): aspartate 64, asparagine 66, aspartate 68, tyrosine 70, glutamate 75, aspartate 100, aspartate 102, asparagine 104, cysteine 106, glutamate 111, aspartate 144, asparagine 146, aspartate 148, glutamate 150, and glutamate 155. The disordered stretch occupies residues 185–205 (NGEQDEEGASGRETEAAEADG).

Homodimer. In terms of tissue distribution, detected in the retina. Detected in rod and cone photoreceptor cells (at protein level). Also present in certain pinealocytes.

The protein localises to the membrane. Its subcellular location is the photoreceptor inner segment. It is found in the cell projection. The protein resides in the cilium. It localises to the photoreceptor outer segment. In terms of biological role, stimulates retinal guanylyl cyclase when free calcium ions concentration is low and inhibits guanylyl cyclase when free calcium ions concentration is elevated. This Ca(2+)-sensitive regulation of retinal guanylyl cyclase is a key event in recovery of the dark state of rod photoreceptors following light exposure. May be involved in cone photoreceptor light response and recovery of response in bright light. This is Guanylyl cyclase-activating protein 1 (GUCA1A) from Bos taurus (Bovine).